We begin with the raw amino-acid sequence, 168 residues long: DNA damage-inducible transcript 3 protein (168 aa).

The tract at residues 10 to 18 is interaction with TRIB3; it reads FGALSSWEL. Positions 10–26 are N-terminal; it reads FGALSSWELEAWYEDLQ. A phosphoserine; by CK2 mark is found at Ser14, Ser15, Ser30, and Ser31. Positions 31-141 are disordered; it reads SDENRGTCVS…QLAEENERLK (111 aa). The segment covering 76–90 has biased composition (low complexity); that stretch reads SQSPCSPESSQSSLA. 2 positions are modified to phosphoserine; by MAPK14: Ser78 and Ser81. In terms of domain architecture, bZIP spans 98-161; sequence QGRTRKRKQS…EATRRALIDR (64 aa). The tract at residues 100–129 is basic motif; it reads RTRKRKQSGQSPARAGKQRMKEKEQENERK. Positions 118-141 are enriched in basic and acidic residues; that stretch reads RMKEKEQENERKVAQLAEENERLK. Residues 133 to 147 are leucine-zipper; it reads LAEENERLKQEIERL.

The protein belongs to the bZIP family. Heterodimer. Interacts with TCF7L2/TCF4, EP300/P300, HDAC1, HDAC5 and HDAC6. Interacts with TRIB3 which blocks its association with EP300/P300. Interacts with FOXO3, CEBPB and ATF4. Ubiquitinated, leading to its degradation by the proteasome. In terms of processing, phosphorylation at serine residues by MAPK14 enhances its transcriptional activation activity while phosphorylation at serine residues by CK2 inhibits its transcriptional activation activity.

Its subcellular location is the cytoplasm. The protein localises to the nucleus. Multifunctional transcription factor in ER stress response. Plays an essential role in the response to a wide variety of cell stresses and induces cell cycle arrest and apoptosis in response to ER stress. Plays a dual role both as an inhibitor of CCAAT/enhancer-binding protein (C/EBP) function and as an activator of other genes. Acts as a dominant-negative regulator of C/EBP-induced transcription: dimerizes with members of the C/EBP family, impairs their association with C/EBP binding sites in the promoter regions, and inhibits the expression of C/EBP regulated genes. Positively regulates the transcription of TRIB3, IL6, IL8, IL23, TNFRSF10B/DR5, PPP1R15A/GADD34, BBC3/PUMA, BCL2L11/BIM and ERO1L. Negatively regulates; expression of BCL2 and MYOD1, ATF4-dependent transcriptional activation of asparagine synthetase (ASNS), CEBPA-dependent transcriptional activation of hepcidin (HAMP) and CEBPB-mediated expression of peroxisome proliferator-activated receptor gamma (PPARG). Inhibits the canonical Wnt signaling pathway by binding to TCF7L2/TCF4, impairing its DNA-binding properties and repressing its transcriptional activity. Plays a regulatory role in the inflammatory response through the induction of caspase-11 (CASP4/CASP11) which induces the activation of caspase-1 (CASP1) and both these caspases increase the activation of pro-IL1B to mature IL1B which is involved in the inflammatory response. The protein is DNA damage-inducible transcript 3 protein (DDIT3) of Bos taurus (Bovine).